Consider the following 114-residue polypeptide: V-type proton ATPase subunit G (114 aa).

Ser2 is subject to N-acetylserine.

This sequence belongs to the V-ATPase G subunit family. V-ATPase is a heteromultimeric enzyme composed of a peripheral catalytic V1 complex (components A to H) attached to an integral membrane V0 proton pore complex (components: a, c, c', c'', d, e, f and VOA1).

Its subcellular location is the vacuole membrane. Functionally, subunit of the V1 complex of vacuolar(H+)-ATPase (V-ATPase), a multisubunit enzyme composed of a peripheral complex (V1) that hydrolyzes ATP and a membrane integral complex (V0) that translocates protons. V-ATPase is responsible for acidifying and maintaining the pH of intracellular compartments. This chain is V-type proton ATPase subunit G, found in Saccharomyces cerevisiae (strain ATCC 204508 / S288c) (Baker's yeast).